We begin with the raw amino-acid sequence, 150 residues long: MFEEMILEKVRKEAERIAEEQGLEIFDVQYRRESRGWILRIIIDNPMGYVSVRDCELFSREMERFLDREDLIEHSYTLEVSSPGLDRPLRGPRDYVRFTGKLAKIVTKDGKTFIGRIESFVDGTITISDGKKKYEINIDDVKRANLEVEF.

This sequence belongs to the RimP family.

It is found in the cytoplasm. Functionally, required for maturation of 30S ribosomal subunits. This chain is Ribosome maturation factor RimP, found in Thermotoga sp. (strain RQ2).